The following is a 544-amino-acid chain: Serine/threonine-protein kinase PAK 1 (544 aa).

The disordered stretch occupies residues 1-77; that stretch reads MSNNGLDIQD…KEKERPEISL (77 aa). The residue at position 2 (serine 2) is an N-acetylserine. Serine 21 is modified (phosphoserine; by PKB and autocatalysis). Residues 68–77 are compositionally biased toward basic and acidic residues; the sequence is KEKERPEISL. The interval 70-140 is autoregulatory region; it reads KERPEISLPS…YNSKKTSNSQ (71 aa). The CRIB domain maps to 75–88; the sequence is ISLPSDFEHTIHVG. The tract at residues 75–105 is GTPase-binding; it reads ISLPSDFEHTIHVGFDAVTGEFTGMPEQWAR. Phosphothreonine; by OXSR1 is present on threonine 84. Serine 115 is modified (phosphoserine). Phosphotyrosine is present on residues tyrosine 131 and tyrosine 142. A phosphoserine; by autocatalysis mark is found at serine 144 and serine 149. Position 153 is a phosphotyrosine; by JAK2 (tyrosine 153). Residues 161 to 193 form a disordered region; sequence VKAVSETPAVPPVSEDEDDDDDGTPPPVIAPRP. Serine 174 carries the post-translational modification Phosphoserine. Positions 174-183 are enriched in acidic residues; it reads SEDEDDDDDG. Threonine 184 is modified (phosphothreonine). The residue at position 198 (serine 198) is a Phosphoserine; by autocatalysis. The residue at position 200 (tyrosine 200) is a Phosphotyrosine; by JAK2. Serine 203 carries the post-translational modification Phosphoserine; by autocatalysis. Threonine 211 and threonine 218 each carry phosphothreonine. The segment at 212 to 250 is disordered; it reads PTRDVATSPISPTENNTTPPDALTRNTEKQKKKPKMSDE. Phosphoserine is present on residues serine 219 and serine 222. Residues 219–230 show a composition bias toward polar residues; the sequence is SPISPTENNTTP. Phosphothreonine occurs at positions 224, 228, and 229. The Protein kinase domain maps to 269–520; sequence YTRFEKIGQG…AKELLQHQFL (252 aa). Residue 275–283 participates in ATP binding; sequence IGQGASGTV. Tyrosine 284 carries the phosphotyrosine; by JAK2 modification. Lysine 298 contributes to the ATP binding site. Aspartate 388 acts as the Proton acceptor in catalysis. Threonine 422 is subject to Phosphothreonine; by autocatalysis, BRSK2 and PDPK1.

The protein belongs to the protein kinase superfamily. STE Ser/Thr protein kinase family. STE20 subfamily. Homodimer in its autoinhibited state. Active as monomer. Interacts with GIT1. Component of cytoplasmic complexes, which also contains PXN, ARHGEF7 and GIT1. Interacts with NISCH. Interacts with DVL1; mediates the formation of a DVL1, MUSK and PAK1 ternary complex involved in AChR clustering. Binds to the caspase-cleaved p110 isoform of CDC2L1 and CDC2L2, p110C, but not the full-length proteins. Interacts with ARHGEF7. Interacts tightly with GTP-bound but not GDP-bound CDC42/P21 and RAC1. Probably found in a ternary complex composed of DSCAM, PAK1 and RAC1. Interacts with DSCAM (via cytoplasmic domain); the interaction is direct and enhanced in presence of RAC1. Interacts with SCRIB. Interacts with PDPK1. Interacts (via kinase domain) with RAF1. Interacts with NCK1 and NCK2. Interacts with TBCB. Interacts with BRSK2. Interacts with SNAI1. Interacts with CIB1 (via N-terminal region); the interaction is direct, promotes PAK1 activity and occurs in a calcium-dependent manner. Interacts with INPP5K. Interacts with gamma-tubulin. Interacts with RHOU; the interaction promotes PAK1 activation. Mg(2+) serves as cofactor. Autophosphorylated in trans, meaning that in a dimer, one kinase molecule phosphorylates the other one. Activated by autophosphorylation at Thr-422 in response to a conformation change, triggered by interaction with GTP-bound CDC42 or RAC1. Activated by phosphorylation at Thr-422 by BRSK2 and by PDPK1. Phosphorylated by JAK2 in response to PRL; this increases PAK1 kinase activity. Phosphorylated at Ser-21 by PKB/AKT; this reduces interaction with NCK1 and association with focal adhesion sites. Upon DNA damage, phosphorylated at Thr-211 and translocates to the nucleoplasm. Phosphorylated at tyrosine residues, which can be enhanced by NTN1.

The protein resides in the cytoplasm. It is found in the cell junction. The protein localises to the focal adhesion. It localises to the cell projection. Its subcellular location is the lamellipodium. The protein resides in the cell membrane. It is found in the ruffle membrane. The protein localises to the invadopodium. It localises to the nucleus. Its subcellular location is the nucleoplasm. The protein resides in the chromosome. It is found in the cytoskeleton. The protein localises to the microtubule organizing center. It localises to the centrosome. It catalyses the reaction L-seryl-[protein] + ATP = O-phospho-L-seryl-[protein] + ADP + H(+). The catalysed reaction is L-threonyl-[protein] + ATP = O-phospho-L-threonyl-[protein] + ADP + H(+). Its activity is regulated as follows. Phosphorylation of Thr-84 by OXSR1 inhibits activation. Activated by binding small G proteins. Binding of GTP-bound CDC42 or RAC1 to the autoregulatory region releases monomers from the autoinhibited dimer, and enables activation by phosphorylation of Thr-422. Its function is as follows. Protein kinase involved in intracellular signaling pathways downstream of integrins and receptor-type kinases that plays an important role in cytoskeleton dynamics, in cell adhesion, migration, proliferation, apoptosis, mitosis, and in vesicle-mediated transport processes. Can directly phosphorylate BAD and protects cells against apoptosis. Activated by interaction with CDC42 and RAC1. Functions as a GTPase effector that links the Rho-related GTPases CDC42 and RAC1 to the JNK MAP kinase pathway. Phosphorylates and activates MAP2K1, and thereby mediates activation of downstream MAP kinases. Involved in the reorganization of the actin cytoskeleton, actin stress fibers and of focal adhesion complexes. Phosphorylates the tubulin chaperone TBCB and thereby plays a role in the regulation of microtubule biogenesis and organization of the tubulin cytoskeleton. Plays a role in the regulation of insulin secretion in response to elevated glucose levels. Part of a ternary complex that contains PAK1, DVL1 and MUSK that is important for MUSK-dependent regulation of AChR clustering during the formation of the neuromuscular junction (NMJ). Activity is inhibited in cells undergoing apoptosis, potentially due to binding of CDC2L1 and CDC2L2. Phosphorylates MYL9/MLC2. Phosphorylates RAF1 at 'Ser-338' and 'Ser-339' resulting in: activation of RAF1, stimulation of RAF1 translocation to mitochondria, phosphorylation of BAD by RAF1, and RAF1 binding to BCL2. Phosphorylates SNAI1 at 'Ser-246' promoting its transcriptional repressor activity by increasing its accumulation in the nucleus. In podocytes, promotes NR3C2 nuclear localization. Required for atypical chemokine receptor ACKR2-induced phosphorylation of LIMK1 and cofilin (CFL1) and for the up-regulation of ACKR2 from endosomal compartment to cell membrane, increasing its efficiency in chemokine uptake and degradation. In synapses, seems to mediate the regulation of F-actin cluster formation performed by SHANK3, maybe through CFL1 phosphorylation and inactivation. Plays a role in RUFY3-mediated facilitating gastric cancer cells migration and invasion. In response to DNA damage, phosphorylates MORC2 which activates its ATPase activity and facilitates chromatin remodeling. In neurons, plays a crucial role in regulating GABA(A) receptor synaptic stability and hence GABAergic inhibitory synaptic transmission through its role in F-actin stabilization. In hippocampal neurons, necessary for the formation of dendritic spines and excitatory synapses; this function is dependent on kinase activity and may be exerted by the regulation of actomyosin contractility through the phosphorylation of myosin II regulatory light chain (MLC). Along with GIT1, positively regulates microtubule nucleation during interphase. Phosphorylates FXR1, promoting its localization to stress granules and activity. Phosphorylates ILK on 'Thr-173' and 'Ser-246', promoting nuclear export of ILK. This is Serine/threonine-protein kinase PAK 1 from Bos taurus (Bovine).